We begin with the raw amino-acid sequence, 513 residues long: Xylose import ATP-binding protein XylG (513 aa).

ABC transporter domains are found at residues 5–242 (LEMK…VGRE) and 259–505 (LRVE…LRSE). 37-44 (GENGSGKS) is an ATP binding site.

It belongs to the ABC transporter superfamily. Xylose importer (TC 3.A.1.2.4) family. The complex is composed of two ATP-binding proteins (XylG), two transmembrane proteins (XylH) and a solute-binding protein (XylF).

Its subcellular location is the cell inner membrane. The enzyme catalyses D-xylose(out) + ATP + H2O = D-xylose(in) + ADP + phosphate + H(+). Functionally, part of the ABC transporter complex XylFGH involved in xylose import. Responsible for energy coupling to the transport system. In Pectobacterium atrosepticum (strain SCRI 1043 / ATCC BAA-672) (Erwinia carotovora subsp. atroseptica), this protein is Xylose import ATP-binding protein XylG.